A 145-amino-acid chain; its full sequence is Basic phospholipase A2 PC10 (145 aa).

The signal sequence occupies residues M1–A21. Positions I22 to L27 are excised as a propeptide. Intrachain disulfides connect C38–C98, C54–C144, C56–C72, C71–C125, C78–C118, C87–C111, and C105–C116. Ca(2+)-binding residues include Y55, G57, and G59. H75 is an active-site residue. D76 contacts Ca(2+). The active site involves D119.

The protein belongs to the phospholipase A2 family. Group I subfamily. D49 sub-subfamily. Requires Ca(2+) as cofactor.

The protein resides in the secreted. The enzyme catalyses a 1,2-diacyl-sn-glycero-3-phosphocholine + H2O = a 1-acyl-sn-glycero-3-phosphocholine + a fatty acid + H(+). Its function is as follows. PLA2 catalyzes the calcium-dependent hydrolysis of the 2-acyl groups in 3-sn-phosphoglycerides. This chain is Basic phospholipase A2 PC10, found in Laticauda laticaudata (Blue-ringed sea krait).